We begin with the raw amino-acid sequence, 153 residues long: Probable succinate transporter subunit YjjB (153 aa).

4 helical membrane passes run 7 to 27, 51 to 71, 83 to 103, and 125 to 145; these read WALLQDMVLAAIPALGFAMVF, MIHFGMNIELASLVASIMIGI, VFTVAAVIPMFPGISAYTAMI, and FLKASFIVGALSIGLSLPGLW.

Belongs to the ThrE exporter (TC 2.A.79) family. The transporter is composed of YjjB and YjjP.

It localises to the cell inner membrane. In terms of biological role, involved in succinate export with YjjP. Both proteins are required for export. The polypeptide is Probable succinate transporter subunit YjjB (Yersinia pestis bv. Antiqua (strain Antiqua)).